Here is a 57-residue protein sequence, read N- to C-terminus: Large ribosomal subunit protein bL32 (57 aa).

Over residues 1–19 the composition is skewed to basic residues; the sequence is MATPKRRMSRANTRSRRAQ. Positions 1-20 are disordered; that stretch reads MATPKRRMSRANTRSRRAQW.

Belongs to the bacterial ribosomal protein bL32 family.

This is Large ribosomal subunit protein bL32 from Mycobacterium leprae (strain Br4923).